Consider the following 904-residue polypeptide: Toll-like receptor 3 (904 aa).

The N-terminal stretch at 1 to 23 (MRQTLPCIYFWGGLLPFGMLCAS) is a signal peptide. Residues 24–51 (STTKCTVSHEVADCSHLKLTQVPDDLPT) form the LRRNT domain. Over 24 to 704 (STTKCTVSHE…SCKDSAPFEL (681 aa)) the chain is Lumenal. An intrachain disulfide couples cysteine 28 to cysteine 37. Asparagine 52, asparagine 57, and asparagine 70 each carry an N-linked (GlcNAc...) asparagine glycan. LRR repeat units follow at residues 52–73 (NITV…NFTR), 76–97 (QLTS…LCQK), 100–121 (MLKV…TFAF), 124–145 (NLTE…PFVK), 148–168 (NLIT…GTQV), and 172–193 (NLQE…ELDI). Cysteine 95 and cysteine 122 are oxidised to a cystine. An N-linked (GlcNAc...) asparagine glycan is attached at asparagine 124. Residue asparagine 196 is glycosylated (N-linked (GlcNAc...) asparagine). LRR repeat units follow at residues 198–219 (SLKK…CFHA) and 222–244 (RLFG…LCLE). 5 N-linked (GlcNAc...) asparagine glycosylation sites follow: asparagine 247, asparagine 252, asparagine 265, asparagine 275, and asparagine 291. LRR repeat units follow at residues 249–270 (SIRN…TFLG), 275–296 (NLTM…SFAW), 299–320 (QLEY…SLHG), 323–344 (NVRY…ASLP), 356–377 (CLEH…MFTG), 380–400 (NLKY…TNET), 408–429 (PLHI…AFSW), 432–454 (HLEV…EWRG), 465–486 (YNKY…QRLM), 507–528 (NLTI…MLEG), 531–552 (KLEI…ANPG), 563–584 (HLHI…VFKD), 587–608 (ELKI…VFNN), and 611–632 (SLKS…VFGP). 2 N-linked (GlcNAc...) asparagine glycosylation sites follow: asparagine 398 and asparagine 413. A glycan (N-linked (GlcNAc...) asparagine) is linked at asparagine 507. N-linked (GlcNAc...) asparagine glycans are attached at residues asparagine 636 and asparagine 662. The LRRCT domain occupies 645 to 698 (NPFDCTCESIAWFVNWINETHTNIPELSSHYLCNTPPHYHGFPVRLFDTSSCKD). Intrachain disulfides connect cysteine 649/cysteine 677 and cysteine 651/cysteine 696. A helical transmembrane segment spans residues 705-725 (FFMINTSILLIFIFIVLLIHF). The Cytoplasmic segment spans residues 726-904 (EGWRISFYWN…VALGSKNSVH (179 aa)). Positions 754–897 (FEYAAYIIHA…AFRHKLQVAL (144 aa)) constitute a TIR domain. Tyrosine 759 is subject to Phosphotyrosine. Glycyl lysine isopeptide (Lys-Gly) (interchain with G-Cter in ubiquitin) cross-links involve residues lysine 765, lysine 812, and lysine 831. The residue at position 858 (tyrosine 858) is a Phosphotyrosine.

Belongs to the Toll-like receptor family. As to quaternary structure, monomer and homodimer; dimerization is triggered by ligand-binding, the signaling unit is composed of one ds-RNA of around 40 bp and two TLR3 molecules, and lateral clustering of signaling units along the length of the ds-RNA ligand is required for TLR3 signal transduction. Interacts (via transmembrane domain) with UNC93B1; the interaction is required for transport from the ER to the endosomes. Interacts with SRC; upon binding of double-stranded RNA. Interacts with TICAM1 (via the TIR domain) in response to poly(I:C) and this interaction is enhanced in the presence of WDFY1. The tyrosine-phosphorylated form (via TIR domain) interacts with WDFY1 (via WD repeat 2) in response to poly(I:C). In terms of processing, heavily N-glycosylated, except on that part of the surface of the ectodomain that is involved in ligand binding. TLR3 signaling requires a proteolytic cleavage mediated by cathepsins CTSB and CTSH, the cleavage occurs between amino acids 252 and 346. The cleaved form of TLR3 is the predominant form found in endosomes. Post-translationally, ubiquitinated by TRIM3; leading to recognition and sorting of polyubiquitinated TLR3 by the ESCRT complexes. Ubiquitinated by ZNRF1 via 'Lys-63'-linked ubiquitin chains; leading to TLR3 lysosomal trafficking and degradation. Ubiquitinated by RNF170 at Lys-765 via 'Lys-48'-linked ubiquitin chains; leading to TLR3 proteasomal degradation. As to expression, expressed at high level in placenta and pancreas. Also detected in CD11c+ immature dendritic cells. Only expressed in dendritic cells and not in other leukocytes, including monocyte precursors. TLR3 is the TLR that is expressed most strongly in the brain, especially in astrocytes, glia, and neurons.

The protein localises to the endoplasmic reticulum membrane. It is found in the endosome membrane. It localises to the early endosome. Key component of innate and adaptive immunity. TLRs (Toll-like receptors) control host immune response against pathogens through recognition of molecular patterns specific to microorganisms. TLR3 is a nucleotide-sensing TLR which is activated by double-stranded RNA, a sign of viral infection. Acts via the adapter TRIF/TICAM1, leading to NF-kappa-B activation, IRF3 nuclear translocation, cytokine secretion and the inflammatory response. The chain is Toll-like receptor 3 from Homo sapiens (Human).